We begin with the raw amino-acid sequence, 67 residues long: DNA-directed RNA polymerase subunit omega (67 aa).

Belongs to the RNA polymerase subunit omega family. As to quaternary structure, the RNAP catalytic core consists of 2 alpha, 1 beta, 1 beta' and 1 omega subunit. When a sigma factor is associated with the core the holoenzyme is formed, which can initiate transcription.

It catalyses the reaction RNA(n) + a ribonucleoside 5'-triphosphate = RNA(n+1) + diphosphate. Promotes RNA polymerase assembly. Latches the N- and C-terminal regions of the beta' subunit thereby facilitating its interaction with the beta and alpha subunits. This Listeria innocua serovar 6a (strain ATCC BAA-680 / CLIP 11262) protein is DNA-directed RNA polymerase subunit omega.